The chain runs to 159 residues: RNA pyrophosphohydrolase (159 aa).

The region spanning 6-149 is the Nudix hydrolase domain; sequence GFRPNVGIIL…KREVYRRALK (144 aa). The short motif at 38-59 is the Nudix box element; it reads GGINPDETPEDALYRELNEEVG.

This sequence belongs to the Nudix hydrolase family. RppH subfamily. It depends on a divalent metal cation as a cofactor.

Functionally, accelerates the degradation of transcripts by removing pyrophosphate from the 5'-end of triphosphorylated RNA, leading to a more labile monophosphorylated state that can stimulate subsequent ribonuclease cleavage. The chain is RNA pyrophosphohydrolase from Pseudomonas entomophila (strain L48).